The primary structure comprises 303 residues: MLSTHLLFLATTLLTSLFHPIAAHVAKRSGSLQQITDFGDNPTGVGMYIYVPNNLASNPGIVVAIHYCTGTGPGYYSNSFYATLSEQYGFIVIYPSSPYSGGCWDVSSQATLTHNGGGNSNSIANMVTWTISEYGADSKKVFVTGSSSGAMMTNVMAATYPELFAAGTVYSGVSAGCFYSDTNQVDGWNSTCAQGDVITTPEHWASIAEAMYPGYSGSRPKMQIYHGSVDTTLYPQNYYETCKQWAGVFGYDYSAPESTEANTPQTNYETTIWGDNLQGIFATGVGHTVPIHGDKDMEWFGFA.

Positions 1 to 23 (MLSTHLLFLATTLLTSLFHPIAA) are cleaved as a signal peptide. Catalysis depends on serine 147, which acts as the Charge relay system. A glycan (N-linked (GlcNAc...) asparagine) is linked at asparagine 189.

This sequence belongs to the carbohydrate esterase 1 (CE1) family. AxeA subfamily. As to quaternary structure, monomer.

The protein resides in the secreted. The catalysed reaction is Deacetylation of xylans and xylo-oligosaccharides.. It functions in the pathway glycan degradation; xylan degradation. Functionally, acetylxylan esterase involved in the hydrolysis of xylan, a major structural heterogeneous polysaccharide found in plant biomass representing the second most abundant polysaccharide in the biosphere, after cellulose. Degrades acetylated xylans by cleaving acetyl side groups from the hetero-xylan backbone. The protein is Probable acetylxylan esterase A (axeA) of Aspergillus niger (strain ATCC MYA-4892 / CBS 513.88 / FGSC A1513).